A 198-amino-acid chain; its full sequence is MAKILVLYYSMYGHIETMAHAVAEGANKVDGAEVVIKRVPETMQPEIFAKAGGKTQNAPVATPQELPDYDAIIFGTPTRFGNMSGQMRTFLDQTGGLWASGALYGKLASVFSSTGTGGGQEQTITSTWTTLAHHGMVIVPIGYAAQELFDVSQVRGGTPYGATTIAGGDGSRQPSQEELSIARYQGEYVAGLAVKLNG.

Residues 4–189 (ILVLYYSMYG…SIARYQGEYV (186 aa)) form the Flavodoxin-like domain. FMN-binding positions include 10-15 (SMYGHI) and 78-80 (TRF). Tyrosine 12 is a binding site for NAD(+). Residue tryptophan 98 participates in substrate binding. FMN-binding positions include 113–118 (STGTGG) and histidine 133.

It belongs to the WrbA family. FMN serves as cofactor.

The enzyme catalyses a quinone + NADH + H(+) = a quinol + NAD(+). The catalysed reaction is a quinone + NADPH + H(+) = a quinol + NADP(+). The polypeptide is NAD(P)H dehydrogenase (quinone) (Citrobacter koseri (strain ATCC BAA-895 / CDC 4225-83 / SGSC4696)).